We begin with the raw amino-acid sequence, 308 residues long: D-alanine--D-alanine ligase (308 aa).

The region spanning 105-302 is the ATP-grasp domain; that stretch reads KAIFRSLGLA…FPDLCDRILD (198 aa). Residue 133–188 coordinates ATP; it reads DLPFGLPCVVKPAGEGSSVGVHLVNAAAELGPACRDAAGYAGDVIVERYVKGTEVD. Mg(2+) contacts are provided by Asp-256, Glu-269, and Asn-271.

Belongs to the D-alanine--D-alanine ligase family. Mg(2+) serves as cofactor. Mn(2+) is required as a cofactor.

The protein localises to the cytoplasm. It catalyses the reaction 2 D-alanine + ATP = D-alanyl-D-alanine + ADP + phosphate + H(+). The protein operates within cell wall biogenesis; peptidoglycan biosynthesis. Its function is as follows. Cell wall formation. In Anaeromyxobacter dehalogenans (strain 2CP-C), this protein is D-alanine--D-alanine ligase.